Reading from the N-terminus, the 338-residue chain is GTPase Obg (338 aa).

The Obg domain occupies 1–159 (MKFIDEVTLF…AKLRLELKLM (159 aa)). Positions 160 to 331 (ADVGLLGLPN…LLDEIARRLW (172 aa)) constitute an OBG-type G domain. GTP contacts are provided by residues 166 to 173 (GLPNAGKS), 191 to 195 (FTTIK), 213 to 216 (DIPG), 283 to 286 (TKLD), and 312 to 314 (SSA). Positions 173 and 193 each coordinate Mg(2+).

This sequence belongs to the TRAFAC class OBG-HflX-like GTPase superfamily. OBG GTPase family. Monomer. Mg(2+) is required as a cofactor.

It is found in the cytoplasm. In terms of biological role, an essential GTPase which binds GTP, GDP and possibly (p)ppGpp with moderate affinity, with high nucleotide exchange rates and a fairly low GTP hydrolysis rate. Plays a role in control of the cell cycle, stress response, ribosome biogenesis and in those bacteria that undergo differentiation, in morphogenesis control. The protein is GTPase Obg of Pelobacter propionicus (strain DSM 2379 / NBRC 103807 / OttBd1).